A 128-amino-acid chain; its full sequence is Large ribosomal subunit protein uL18 (128 aa).

The protein belongs to the universal ribosomal protein uL18 family. As to quaternary structure, part of the 50S ribosomal subunit; part of the 5S rRNA/L5/L18/L25 subcomplex. Contacts the 5S and 23S rRNAs.

This is one of the proteins that bind and probably mediate the attachment of the 5S RNA into the large ribosomal subunit, where it forms part of the central protuberance. The chain is Large ribosomal subunit protein uL18 from Acidothermus cellulolyticus (strain ATCC 43068 / DSM 8971 / 11B).